Reading from the N-terminus, the 285-residue chain is Protease HtpX homolog (285 aa).

A run of 2 helical transmembrane segments spans residues 7–27 (TAML…MIGG) and 30–50 (GMTI…WFSD). Position 131 (H131) interacts with Zn(2+). Residue E132 is part of the active site. H135 contacts Zn(2+). Helical transmembrane passes span 141 to 161 (ILIS…ANFA) and 177 to 197 (IAGI…QMAI). Position 202 (E202) interacts with Zn(2+).

Belongs to the peptidase M48B family. Zn(2+) serves as cofactor.

Its subcellular location is the cell inner membrane. The protein is Protease HtpX homolog of Paraburkholderia phytofirmans (strain DSM 17436 / LMG 22146 / PsJN) (Burkholderia phytofirmans).